The following is a 403-amino-acid chain: Homoserine O-succinyltransferase (403 aa).

The tract at residues 1–31 is disordered; sequence MTELQVDPAASADPAAAADTPRHPAATLPPD. Over residues 7–26 the composition is skewed to low complexity; it reads DPAASADPAAAADTPRHPAA. Residues 74–383 form the AB hydrolase-1 domain; sequence NAVLICHALN…HGHDAFLLED (310 aa). Catalysis depends on Ser178, which acts as the Nucleophile. Arg248 provides a ligand contact to substrate. Catalysis depends on residues Asp343 and His376. Asp377 serves as a coordination point for substrate.

This sequence belongs to the AB hydrolase superfamily. MetX family. As to quaternary structure, homodimer.

It localises to the cytoplasm. The enzyme catalyses L-homoserine + succinyl-CoA = O-succinyl-L-homoserine + CoA. Its pathway is amino-acid biosynthesis; L-methionine biosynthesis via de novo pathway; O-succinyl-L-homoserine from L-homoserine: step 1/1. Transfers a succinyl group from succinyl-CoA to L-homoserine, forming succinyl-L-homoserine. The sequence is that of Homoserine O-succinyltransferase from Ralstonia nicotianae (strain ATCC BAA-1114 / GMI1000) (Ralstonia solanacearum).